A 446-amino-acid polypeptide reads, in one-letter code: N-succinylarginine dihydrolase (446 aa).

Residues 19–28 (AGLSFGNVAS), asparagine 110, and 137–138 (HR) contribute to the substrate site. Glutamate 174 is a catalytic residue. Position 213 (arginine 213) interacts with substrate. Histidine 249 is an active-site residue. 2 residues coordinate substrate: aspartate 251 and asparagine 364. Catalysis depends on cysteine 370, which acts as the Nucleophile.

The protein belongs to the succinylarginine dihydrolase family. As to quaternary structure, homodimer.

It catalyses the reaction N(2)-succinyl-L-arginine + 2 H2O + 2 H(+) = N(2)-succinyl-L-ornithine + 2 NH4(+) + CO2. It participates in amino-acid degradation; L-arginine degradation via AST pathway; L-glutamate and succinate from L-arginine: step 2/5. In terms of biological role, catalyzes the hydrolysis of N(2)-succinylarginine into N(2)-succinylornithine, ammonia and CO(2). In Burkholderia cenocepacia (strain ATCC BAA-245 / DSM 16553 / LMG 16656 / NCTC 13227 / J2315 / CF5610) (Burkholderia cepacia (strain J2315)), this protein is N-succinylarginine dihydrolase.